Reading from the N-terminus, the 110-residue chain is MTVFKQIIDGLIDCEKVFENENFIAIKDRFPQAPVHLLIIPKKPIPRFQDIPGDEMILMAEAGKIVQELAAEFGIADGYRVVINNGAEGGQAVFHLHIHLLGGRPLGAIA.

The 108-residue stretch at 3-110 (VFKQIIDGLI…LGGRPLGAIA (108 aa)) folds into the HIT domain. Positions 95 to 99 (HLHIH) match the Histidine triad motif motif.

This is HIT-like protein CPn_0488/CP_0266/CPj0488/CpB0508 from Chlamydia pneumoniae (Chlamydophila pneumoniae).